The sequence spans 431 residues: Glutamate-1-semialdehyde 2,1-aminomutase (431 aa).

Lysine 264 is subject to N6-(pyridoxal phosphate)lysine.

The protein belongs to the class-III pyridoxal-phosphate-dependent aminotransferase family. HemL subfamily. As to quaternary structure, homodimer. Pyridoxal 5'-phosphate serves as cofactor.

It localises to the cytoplasm. It carries out the reaction (S)-4-amino-5-oxopentanoate = 5-aminolevulinate. It participates in porphyrin-containing compound metabolism; protoporphyrin-IX biosynthesis; 5-aminolevulinate from L-glutamyl-tRNA(Glu): step 2/2. This is Glutamate-1-semialdehyde 2,1-aminomutase from Clostridium beijerinckii (strain ATCC 51743 / NCIMB 8052) (Clostridium acetobutylicum).